The primary structure comprises 223 residues: Cuticular glutathione peroxidase (223 aa).

The first 19 residues, 1–19, serve as a signal peptide directing secretion; that stretch reads MSAQLLILSHVVLLQLIVA. Asparagine 39 carries an N-linked (GlcNAc...) asparagine glycan. Cysteine 74 is a catalytic residue. A glycan (N-linked (GlcNAc...) asparagine) is linked at asparagine 92.

It belongs to the glutathione peroxidase family. As to quaternary structure, homotetramer.

It is found in the secreted. It catalyses the reaction 2 glutathione + H2O2 = glutathione disulfide + 2 H2O. Could inhibit the oxidative burst of leukocytes and neutralize the secondary products of lipid peroxidation, thus providing the resistance of these parasites to immune effector mechanisms and their persistence in the mammalian host. It may also be involved in the formation of cross-linking residues such as dityrosine, trityrosine and isotrityrosine identified in cuticular collagen. Highly cross-linked external cortex may also serve to protect the parasite from immune attack. The chain is Cuticular glutathione peroxidase from Wuchereria bancrofti.